Here is a 103-residue protein sequence, read N- to C-terminus: Large ribosomal subunit protein eL21 (103 aa).

This sequence belongs to the eukaryotic ribosomal protein eL21 family.

The polypeptide is Large ribosomal subunit protein eL21 (Sulfurisphaera tokodaii (strain DSM 16993 / JCM 10545 / NBRC 100140 / 7) (Sulfolobus tokodaii)).